The sequence spans 64 residues: MAARCAVCGKGPQTGFTVSHSHIRNKRTFRPNLQPVRTTIDGENVRVRVCVKCIKAGKVQRVEA.

This sequence belongs to the bacterial ribosomal protein bL28 family.

This chain is Large ribosomal subunit protein bL28, found in Bifidobacterium adolescentis (strain ATCC 15703 / DSM 20083 / NCTC 11814 / E194a).